Here is a 225-residue protein sequence, read N- to C-terminus: UPF0758 protein NMCC_1157 (225 aa).

The 123-residue stretch at V102–M224 folds into the MPN domain. 3 residues coordinate Zn(2+): H173, H175, and D186. The short motif at H173–D186 is the JAMM motif element.

The protein belongs to the UPF0758 family.

The polypeptide is UPF0758 protein NMCC_1157 (Neisseria meningitidis serogroup C (strain 053442)).